Consider the following 445-residue polypeptide: CBL-interacting serine/threonine-protein kinase 5 (445 aa).

The Protein kinase domain occupies 12-267; sequence YEMGRLLGKG…IPAIMRTPWL (256 aa). ATP contacts are provided by residues 18-26 and Lys41; that span reads LGKGTFAKV. Catalysis depends on Asp135, which acts as the Proton acceptor. The activation loop stretch occupies residues 153–182; sequence DFGLSALPEQILQDGLLHTQCGTPAYVAPE. Ser157 is modified (phosphoserine). At Thr171 the chain carries Phosphothreonine. The NAF domain maps to 307 to 332; it reads ISPKFFNAFEFISSMSSGFDLSSLFE. Residues 336 to 366 are PPI; the sequence is KVQSVFTSRSSATEVMEKIETVTKEMNMKVK.

It belongs to the protein kinase superfamily. CAMK Ser/Thr protein kinase family. SNF1 subfamily. Requires Mn(2+) as cofactor.

The catalysed reaction is L-seryl-[protein] + ATP = O-phospho-L-seryl-[protein] + ADP + H(+). The enzyme catalyses L-threonyl-[protein] + ATP = O-phospho-L-threonyl-[protein] + ADP + H(+). Functionally, CIPK serine-threonine protein kinases interact with CBL proteins. Binding of a CBL protein to the regulatory NAF domain of CIPK protein lead to the activation of the kinase in a calcium-dependent manner. In Arabidopsis thaliana (Mouse-ear cress), this protein is CBL-interacting serine/threonine-protein kinase 5 (CIPK5).